A 585-amino-acid polypeptide reads, in one-letter code: Arginine--tRNA ligase (585 aa).

The short motif at 131-141 is the 'HIGH' region element; it reads ANPTGPMHVGH.

This sequence belongs to the class-I aminoacyl-tRNA synthetase family. Monomer.

The protein localises to the cytoplasm. It carries out the reaction tRNA(Arg) + L-arginine + ATP = L-arginyl-tRNA(Arg) + AMP + diphosphate. This Chelativorans sp. (strain BNC1) protein is Arginine--tRNA ligase.